Consider the following 425-residue polypeptide: Serine hydroxymethyltransferase (425 aa).

Residues L126 and 130-132 contribute to the (6S)-5,6,7,8-tetrahydrofolate site; that span reads GHL. Position 234 is an N6-(pyridoxal phosphate)lysine (K234).

This sequence belongs to the SHMT family. In terms of assembly, homodimer. The cofactor is pyridoxal 5'-phosphate.

It localises to the cytoplasm. It catalyses the reaction (6R)-5,10-methylene-5,6,7,8-tetrahydrofolate + glycine + H2O = (6S)-5,6,7,8-tetrahydrofolate + L-serine. It participates in one-carbon metabolism; tetrahydrofolate interconversion. It functions in the pathway amino-acid biosynthesis; glycine biosynthesis; glycine from L-serine: step 1/1. Its function is as follows. Catalyzes the reversible interconversion of serine and glycine with tetrahydrofolate (THF) serving as the one-carbon carrier. This reaction serves as the major source of one-carbon groups required for the biosynthesis of purines, thymidylate, methionine, and other important biomolecules. Also exhibits THF-independent aldolase activity toward beta-hydroxyamino acids, producing glycine and aldehydes, via a retro-aldol mechanism. This chain is Serine hydroxymethyltransferase, found in Desulfotalea psychrophila (strain LSv54 / DSM 12343).